The following is a 447-amino-acid chain: Protein king tubby (447 aa).

2 stretches are compositionally biased toward low complexity: residues 71–92 and 157–169; these read GTGP…YSDS and NNNN…NSSS. The interval 71-196 is disordered; that stretch reads GTGPNVTATS…GGAPDTEGDV (126 aa).

Belongs to the TUB family.

The protein localises to the cytoplasm. The protein resides in the nucleus. The protein is Protein king tubby of Anopheles gambiae (African malaria mosquito).